The sequence spans 273 residues: Bis(5'-nucleosyl)-tetraphosphatase, symmetrical (273 aa).

Belongs to the Ap4A hydrolase family.

The enzyme catalyses P(1),P(4)-bis(5'-adenosyl) tetraphosphate + H2O = 2 ADP + 2 H(+). In terms of biological role, hydrolyzes diadenosine 5',5'''-P1,P4-tetraphosphate to yield ADP. In Histophilus somni (strain 129Pt) (Haemophilus somnus), this protein is Bis(5'-nucleosyl)-tetraphosphatase, symmetrical.